Reading from the N-terminus, the 988-residue chain is DExH-box ATP-dependent RNA helicase DExH9 (988 aa).

Residues 1–27 are disordered; that stretch reads MGSVKRKSVEESSDSAPPQKVQREDDS. The Helicase ATP-binding domain occupies 76–232; that stretch reads IKCLDNGESV…WVAKVHQQPC (157 aa). ATP is bound at residue 89-96; sequence AHTSAGKT. The DEVH box signature appears at 180 to 183; that stretch reads DEVH. The 203-residue stretch at 307 to 509 folds into the Helicase C-terminal domain; sequence DIFKLVKMII…SYNMLLNQLR (203 aa).

This sequence belongs to the DExH box helicase family. SKI2 subfamily. Ubiquitous but preferentially expressed in active tissues.

Its subcellular location is the nucleus. It is found in the nucleolus. It catalyses the reaction ATP + H2O = ADP + phosphate + H(+). Its function is as follows. ATP-dependent RNA helicase that associates with the RNA exosome complex. Required for proper rRNA biogenesis and development. Involved in the 3'-processing of the 7S pre-RNA to the mature 5.8S rRNA and also in the removal of rRNA maturation by-products. This Arabidopsis thaliana (Mouse-ear cress) protein is DExH-box ATP-dependent RNA helicase DExH9.